A 345-amino-acid chain; its full sequence is MDANKQKSLDLAMKQIDKAFGKGALMRLGDKEIMPIESISTGSLGLDLALGIGGIPQGRVVEIYGPESSGKTTLALQITAECQKAGGVCAFIDAEHALDVGYAKNLGVDVDNLLVSQPDYGEQALDIVETIARSGAIDLIVIDSVAALTPKSEIEGEMSDQNVGVQARLMSKALRKLTGILHKMNCTVIFINQIRMKIGMMGYGSPETTTGGNALKFYASVRIDVRRIASLKQGESQIGNRVKAKVIKNKVAPPFRQAEFDIMFGEGISKEGELVDYGVKLDIIDKSGAWFSYGETKLGQGRENVKAKFMEDKVLAHEIEEKIKAAMGLGDLMTMDSLDIEDVDL.

ATP is bound at residue 65 to 72 (GPESSGKT).

Belongs to the RecA family.

The protein localises to the cytoplasm. Can catalyze the hydrolysis of ATP in the presence of single-stranded DNA, the ATP-dependent uptake of single-stranded DNA by duplex DNA, and the ATP-dependent hybridization of homologous single-stranded DNAs. It interacts with LexA causing its activation and leading to its autocatalytic cleavage. The protein is Protein RecA of Sulfurimonas denitrificans (strain ATCC 33889 / DSM 1251) (Thiomicrospira denitrificans (strain ATCC 33889 / DSM 1251)).